We begin with the raw amino-acid sequence, 164 residues long: MTNEGIGINRDTSTICLREYVFIHFFPVKLISALTNKTNTMVKLTSIAAGVAAIAAGVAAAPATTTLSPSDERVNLVELGVYVSDIRAHLAQYYLFQAAHPTETYPVEIAEAVFNYGDFTTMLTGIPAEQVTRVITGVPWYSTRLRPAISSALSKDGIYTAIPK.

It belongs to the SRP1/TIP1 family. Seripauperin subfamily.

This is Seripauperin-21 (PAU21) from Saccharomyces cerevisiae (strain ATCC 204508 / S288c) (Baker's yeast).